We begin with the raw amino-acid sequence, 439 residues long: Diaminopimelate decarboxylase (439 aa).

Lys-66 is subject to N6-(pyridoxal phosphate)lysine. Pyridoxal 5'-phosphate is bound by residues Gly-248 and 290–293 (EPGR). Arg-293, Arg-330, and Tyr-334 together coordinate substrate. The Proton donor role is filled by Cys-361. Substrate-binding residues include Glu-362 and Tyr-390. Pyridoxal 5'-phosphate is bound at residue Tyr-390.

It belongs to the Orn/Lys/Arg decarboxylase class-II family. LysA subfamily. In terms of assembly, homodimer. Requires pyridoxal 5'-phosphate as cofactor.

It carries out the reaction meso-2,6-diaminopimelate + H(+) = L-lysine + CO2. It participates in amino-acid biosynthesis; L-lysine biosynthesis via DAP pathway; L-lysine from DL-2,6-diaminopimelate: step 1/1. Functionally, specifically catalyzes the decarboxylation of meso-diaminopimelate (meso-DAP) to L-lysine. The sequence is that of Diaminopimelate decarboxylase from Bacillus subtilis (strain 168).